Here is a 70-residue protein sequence, read N- to C-terminus: Mu-agatoxin-Ao1a (70 aa).

Residues 1–20 (MKAIIFFCFLSVMVFIVAEA) form the signal peptide. Residues 21 to 33 (SSLEALKIFEGER) constitute a propeptide that is removed on maturation. 4 disulfide bridges follow: cysteine 35–cysteine 50, cysteine 42–cysteine 55, cysteine 49–cysteine 65, and cysteine 57–cysteine 63. Asparagine 69 is subject to Asparagine amide.

This sequence belongs to the neurotoxin 07 (Beta/delta-agtx) family. 04 (aga-5) subfamily. Expressed by the venom gland.

It is found in the secreted. Its function is as follows. Insecticidal neurotoxin that modulates the insect Nav channel (DmNaV1/tipE (para/tipE)) in a unique manner, with both the activation and inactivation processes being affected. The voltage dependence of activation is shifted toward more hyperpolarized potentials (analogous to site 4 toxins) and a non-inactivating persistent sodium current is induced (site 3-like action). Interestingly, both effects take place in a voltage-dependent manner, producing a bell-shaped curve between -80 and 0 mV. The chain is Mu-agatoxin-Ao1a from Agelena orientalis (Funnel-web spider).